Consider the following 756-residue polypeptide: 5-methyltetrahydropteroyltriglutamate--homocysteine methyltransferase (756 aa).

Residues 20–23 and Lys114 each bind 5-methyltetrahydropteroyltri-L-glutamate; that span reads RELK. Residues 433–435 and Glu486 each bind L-homocysteine; that span reads IGS. L-methionine is bound by residues 433-435 and Glu486; that span reads IGS. Residues 517 to 518 and Trp563 each bind 5-methyltetrahydropteroyltri-L-glutamate; that span reads RC. Residue Asp601 coordinates L-homocysteine. Asp601 is a binding site for L-methionine. A 5-methyltetrahydropteroyltri-L-glutamate-binding site is contributed by Glu607. Zn(2+) is bound by residues His643, Cys645, and Glu667. His696 acts as the Proton donor in catalysis. Cys728 lines the Zn(2+) pocket.

This sequence belongs to the vitamin-B12 independent methionine synthase family. Zn(2+) is required as a cofactor.

It catalyses the reaction 5-methyltetrahydropteroyltri-L-glutamate + L-homocysteine = tetrahydropteroyltri-L-glutamate + L-methionine. The protein operates within amino-acid biosynthesis; L-methionine biosynthesis via de novo pathway; L-methionine from L-homocysteine (MetE route): step 1/1. In terms of biological role, catalyzes the transfer of a methyl group from 5-methyltetrahydrofolate to homocysteine resulting in methionine formation. The polypeptide is 5-methyltetrahydropteroyltriglutamate--homocysteine methyltransferase (Mycolicibacterium paratuberculosis (strain ATCC BAA-968 / K-10) (Mycobacterium paratuberculosis)).